The chain runs to 342 residues: D-erythrose-4-phosphate dehydrogenase (342 aa).

Position 12–13 (Arg-12–Ile-13) interacts with NAD(+). Substrate is bound by residues Ser-154–Thr-156, Arg-200, Thr-213–Lys-214, and Arg-236. The active-site Nucleophile is the Cys-155. Asn-318 contacts NAD(+).

This sequence belongs to the glyceraldehyde-3-phosphate dehydrogenase family. Epd subfamily. As to quaternary structure, homotetramer.

The protein resides in the cytoplasm. The enzyme catalyses D-erythrose 4-phosphate + NAD(+) + H2O = 4-phospho-D-erythronate + NADH + 2 H(+). The protein operates within cofactor biosynthesis; pyridoxine 5'-phosphate biosynthesis; pyridoxine 5'-phosphate from D-erythrose 4-phosphate: step 1/5. Its function is as follows. Catalyzes the NAD-dependent conversion of D-erythrose 4-phosphate to 4-phosphoerythronate. This is D-erythrose-4-phosphate dehydrogenase from Klebsiella pneumoniae subsp. pneumoniae (strain ATCC 700721 / MGH 78578).